A 354-amino-acid polypeptide reads, in one-letter code: UDP-N-acetylglucosamine--N-acetylmuramyl-(pentapeptide) pyrophosphoryl-undecaprenol N-acetylglucosamine transferase (354 aa).

Residues 12 to 14 (TGG), asparagine 124, arginine 163, serine 187, isoleucine 240, and glutamine 285 each bind UDP-N-acetyl-alpha-D-glucosamine.

Belongs to the glycosyltransferase 28 family. MurG subfamily.

The protein localises to the cell inner membrane. The catalysed reaction is di-trans,octa-cis-undecaprenyl diphospho-N-acetyl-alpha-D-muramoyl-L-alanyl-D-glutamyl-meso-2,6-diaminopimeloyl-D-alanyl-D-alanine + UDP-N-acetyl-alpha-D-glucosamine = di-trans,octa-cis-undecaprenyl diphospho-[N-acetyl-alpha-D-glucosaminyl-(1-&gt;4)]-N-acetyl-alpha-D-muramoyl-L-alanyl-D-glutamyl-meso-2,6-diaminopimeloyl-D-alanyl-D-alanine + UDP + H(+). Its pathway is cell wall biogenesis; peptidoglycan biosynthesis. Cell wall formation. Catalyzes the transfer of a GlcNAc subunit on undecaprenyl-pyrophosphoryl-MurNAc-pentapeptide (lipid intermediate I) to form undecaprenyl-pyrophosphoryl-MurNAc-(pentapeptide)GlcNAc (lipid intermediate II). The chain is UDP-N-acetylglucosamine--N-acetylmuramyl-(pentapeptide) pyrophosphoryl-undecaprenol N-acetylglucosamine transferase from Methylococcus capsulatus (strain ATCC 33009 / NCIMB 11132 / Bath).